The sequence spans 492 residues: Aspartyl/glutamyl-tRNA(Asn/Gln) amidotransferase subunit B (492 aa).

This sequence belongs to the GatB/GatE family. GatB subfamily. Heterotrimer of A, B and C subunits.

It catalyses the reaction L-glutamyl-tRNA(Gln) + L-glutamine + ATP + H2O = L-glutaminyl-tRNA(Gln) + L-glutamate + ADP + phosphate + H(+). The enzyme catalyses L-aspartyl-tRNA(Asn) + L-glutamine + ATP + H2O = L-asparaginyl-tRNA(Asn) + L-glutamate + ADP + phosphate + 2 H(+). Its function is as follows. Allows the formation of correctly charged Asn-tRNA(Asn) or Gln-tRNA(Gln) through the transamidation of misacylated Asp-tRNA(Asn) or Glu-tRNA(Gln) in organisms which lack either or both of asparaginyl-tRNA or glutaminyl-tRNA synthetases. The reaction takes place in the presence of glutamine and ATP through an activated phospho-Asp-tRNA(Asn) or phospho-Glu-tRNA(Gln). This is Aspartyl/glutamyl-tRNA(Asn/Gln) amidotransferase subunit B from Bradyrhizobium diazoefficiens (strain JCM 10833 / BCRC 13528 / IAM 13628 / NBRC 14792 / USDA 110).